A 100-amino-acid chain; its full sequence is Integration host factor subunit beta (100 aa).

It belongs to the bacterial histone-like protein family. In terms of assembly, heterodimer of an alpha and a beta chain.

Functionally, this protein is one of the two subunits of integration host factor, a specific DNA-binding protein that functions in genetic recombination as well as in transcriptional and translational control. The protein is Integration host factor subunit beta of Rhodospirillum rubrum (strain ATCC 11170 / ATH 1.1.1 / DSM 467 / LMG 4362 / NCIMB 8255 / S1).